The primary structure comprises 277 residues: Energy-coupling factor transporter transmembrane protein EcfT (277 aa).

Helical transmembrane passes span 39–59 (ITIL…YAII), 61–81 (FFCF…WNGV), 85–105 (IGLI…GHVF), 121–141 (AIYI…MTVT), 163–183 (VPVD…PTLF), and 254–274 (SKYD…LLIF).

This sequence belongs to the energy-coupling factor EcfT family. In terms of assembly, forms a stable energy-coupling factor (ECF) transporter complex composed of 2 membrane-embedded substrate-binding proteins (S component), 2 ATP-binding proteins (A component) and 2 transmembrane proteins (T component). May be able to interact with more than 1 S component at a time.

It is found in the cell membrane. In terms of biological role, transmembrane (T) component of an energy-coupling factor (ECF) ABC-transporter complex. Unlike classic ABC transporters this ECF transporter provides the energy necessary to transport a number of different substrates. The polypeptide is Energy-coupling factor transporter transmembrane protein EcfT (Lactobacillus helveticus (strain DPC 4571)).